Consider the following 162-residue polypeptide: UPF0114 protein Shewmr4_0646 (162 aa).

4 helical membrane-spanning segments follow: residues 15-35 (IMAP…IKFF), 53-73 (LVLV…IVMV), 108-128 (KVAA…FMDV), and 136-156 (IMWY…MGYL).

The protein belongs to the UPF0114 family.

Its subcellular location is the cell membrane. The sequence is that of UPF0114 protein Shewmr4_0646 from Shewanella sp. (strain MR-4).